The sequence spans 223 residues: Endonuclease V (223 aa).

Residues Asp-35 and Asp-103 each contribute to the Mg(2+) site.

It belongs to the endonuclease V family. It depends on Mg(2+) as a cofactor.

It localises to the cytoplasm. It carries out the reaction Endonucleolytic cleavage at apurinic or apyrimidinic sites to products with a 5'-phosphate.. In terms of biological role, DNA repair enzyme involved in the repair of deaminated bases. Selectively cleaves double-stranded DNA at the second phosphodiester bond 3' to a deoxyinosine leaving behind the intact lesion on the nicked DNA. The chain is Endonuclease V from Salmonella agona (strain SL483).